Reading from the N-terminus, the 150-residue chain is Large ribosomal subunit protein bL9 (150 aa).

This sequence belongs to the bacterial ribosomal protein bL9 family.

Functionally, binds to the 23S rRNA. The polypeptide is Large ribosomal subunit protein bL9 (Buchnera aphidicola subsp. Schizaphis graminum (strain Sg)).